We begin with the raw amino-acid sequence, 177 residues long: Nuclear export protein (177 aa).

2 consecutive short sequence motifs (nuclear export signal) follow at residues 91–100 and 117–127; these read LWLPMKSLSL and MKHQILTRLKL.

Binds M1 protein. May interact with human nucleoporins and exportin XPO1/CRM1.

The protein resides in the virion. The protein localises to the host nucleus. In terms of biological role, mediates the nuclear export of encapsidated genomic RNAs (ribonucleoproteins, RNPs). Acts as an adapter between viral RNPs complexes and the nuclear export machinery of the cell. Possesses no intrinsic RNA-binding activity, but includes a C-terminal M1-binding domain. This domain is believed to allow recognition of RNPs to which the M1 protein is bound. Because the M1 protein is not available in large quantities until the later stages of infection, such an indirect recognition mechanism probably ensures that genomic RNPs are not exported from the nucleus before sufficient quantities of viral mRNA and progeny genomic RNA have been synthesized. Furthermore, the RNPs enters the cytoplasm only when they have associated with the M1 protein that is necessary to guide them to the plasma membrane. May down-regulate viral RNA synthesis when overproduced. The protein is Nuclear export protein (NS) of Homo sapiens (Human).